Reading from the N-terminus, the 279-residue chain is MKENEKIIMEKGIHTDFKENMTYGEYLQLDSLLSSQKRLSDHHDEMLFIVIHQASELWMKLILHELYAAIESIKQDKLQPAFKMLARVSKIQSQIIQSWDILATLTPSEYIEFRDSLGQASGFQSYQYRMIEYALGYKTPHALKIYEKDPELHARLHTALHAPSLYDVAIQALVKEGFPIHKDVLNRDITQPYEEDATVEAAWLEVYADVKKYWNLYQLAEKLIDIEDWLQQWRFRHMKTVERIIGHKMGTGGSSGVSYLKRVLDQRFFPELWNVRTKL.

Substrate is bound by residues 48 to 52, tyrosine 110, and arginine 114; that span reads FIVIH. Residue histidine 237 participates in heme binding. Residue threonine 251 coordinates substrate.

This sequence belongs to the tryptophan 2,3-dioxygenase family. In terms of assembly, homotetramer. The cofactor is heme.

It carries out the reaction L-tryptophan + O2 = N-formyl-L-kynurenine. The protein operates within amino-acid degradation; L-tryptophan degradation via kynurenine pathway; L-kynurenine from L-tryptophan: step 1/2. Heme-dependent dioxygenase that catalyzes the oxidative cleavage of the L-tryptophan (L-Trp) pyrrole ring and converts L-tryptophan to N-formyl-L-kynurenine. Catalyzes the oxidative cleavage of the indole moiety. This chain is Tryptophan 2,3-dioxygenase, found in Bacillus cereus (strain ATCC 10987 / NRS 248).